The following is an 87-amino-acid chain: Small ribosomal subunit protein bS20 (87 aa).

A compositionally biased stretch (basic residues) spans 1–11 (MANHKSALKRI). A disordered region spans residues 1–23 (MANHKSALKRIKQTEKRTERNRH).

This sequence belongs to the bacterial ribosomal protein bS20 family.

Its function is as follows. Binds directly to 16S ribosomal RNA. The protein is Small ribosomal subunit protein bS20 of Geotalea daltonii (strain DSM 22248 / JCM 15807 / FRC-32) (Geobacter daltonii).